Consider the following 346-residue polypeptide: Protein NDL1 (346 aa).

Belongs to the NDRG family. Interacts with GB1. Interacts with the heterodimers formed by GB1 and GG1, or GB1 and GG2. Interacts with RGS1. Expressed in root vasculature, cotyledons, leaves, petals, mature stamens and pollen grains.

The protein localises to the cytoplasm. Interacts with the heterotrimeric G protein beta subunit GB1 and plays an significant role in GB1-dependent regulation of lateral root formation. Involved in a signaling pathway that modulates root auxin transport and auxin gradients. Acts partially by positively regulating the auxin carrier PIN2 and AUX1. Acts, together with GB1 as positive regulator of meristem initiation and branching. GB1 and NDL1 positively regulate basipetal inflorescence auxin transport and modulate MAX2 expression in shoots, which regulates organ and lateral meristem formation by the establishment and maintenance of auxin gradients. In Arabidopsis thaliana (Mouse-ear cress), this protein is Protein NDL1.